The chain runs to 85 residues: Putative plasmid stability protein y4jJ (85 aa).

A compositionally biased stretch (basic and acidic residues) spans 66-78 (EAEHFNQLRDKTP). Positions 66 to 85 (EAEHFNQLRDKTPAEPMSFE) are disordered.

The protein to P.syringae pv tomato plasmid stability protein StbC.

In terms of biological role, involved in plasmid stability. The chain is Putative plasmid stability protein y4jJ from Sinorhizobium fredii (strain NBRC 101917 / NGR234).